A 225-amino-acid chain; its full sequence is Glutathione S-transferase Mu 3 (225 aa).

Residues 5–92 (SSMVLGYWDI…YIARKHNMCG (88 aa)) enclose the GST N-terminal domain. Glutathione contacts are provided by residues 11–12 (YW), 50–54 (WLDVK), and 63–64 (NL). A Glycyl lysine isopeptide (Lys-Gly) (interchain with G-Cter in SUMO2) cross-link involves residue lysine 54. Residue lysine 73 forms a Glycyl lysine isopeptide (Lys-Gly) (interchain with G-Cter in SUMO2) linkage. 76–77 (QS) provides a ligand contact to glutathione. Positions 94–212 (TEEEKIRVDI…QSDQFCKMPI (119 aa)) constitute a GST C-terminal domain. A substrate-binding site is contributed by tyrosine 120.

Belongs to the GST superfamily. Mu family. In terms of assembly, homodimer. The N-terminus is blocked. As to expression, testis and brain.

Its subcellular location is the cytoplasm. The catalysed reaction is RX + glutathione = an S-substituted glutathione + a halide anion + H(+). Its function is as follows. Conjugation of reduced glutathione to a wide number of exogenous and endogenous hydrophobic electrophiles. May govern uptake and detoxification of both endogenous compounds and xenobiotics at the testis and brain blood barriers. This chain is Glutathione S-transferase Mu 3 (GSTM3), found in Homo sapiens (Human).